The following is a 764-amino-acid chain: A-type ATP synthase subunit A (764 aa).

The protein belongs to the ATPase alpha/beta chains family. Has multiple subunits with at least A(3), B(3), C, D, E, F, H, I and proteolipid K(x). In terms of processing, this protein undergoes a protein self splicing that involves a post-translational excision of the VDE intervening region (intein) followed by peptide ligation.

The protein localises to the cell membrane. The enzyme catalyses ATP + H2O + 4 H(+)(in) = ADP + phosphate + 5 H(+)(out). In terms of biological role, component of the A-type ATP synthase that produces ATP from ADP in the presence of a proton gradient across the membrane. The A chain is the catalytic subunit. This chain is A-type ATP synthase subunit A, found in Thermoplasma acidophilum (strain ATCC 25905 / DSM 1728 / JCM 9062 / NBRC 15155 / AMRC-C165).